Consider the following 354-residue polypeptide: Homoserine O-succinyltransferase (354 aa).

C146 (acyl-thioester intermediate) is an active-site residue. The substrate site is built by K167 and S196. H239 (proton acceptor) is an active-site residue. Residue E241 is part of the active site. R253 is a substrate binding site.

Belongs to the MetA family.

It is found in the cytoplasm. The catalysed reaction is L-homoserine + succinyl-CoA = O-succinyl-L-homoserine + CoA. Its pathway is amino-acid biosynthesis; L-methionine biosynthesis via de novo pathway; O-succinyl-L-homoserine from L-homoserine: step 1/1. Its function is as follows. Transfers a succinyl group from succinyl-CoA to L-homoserine, forming succinyl-L-homoserine. This is Homoserine O-succinyltransferase from Methylobacter tundripaludum (strain ATCC BAA-1195 / DSM 17260 / SV96).